We begin with the raw amino-acid sequence, 447 residues long: N-succinylarginine dihydrolase (447 aa).

Substrate contacts are provided by residues 19 to 28, Asn-110, and 137 to 138; these read AGLSFGNVAS and HR. Residue Glu-174 is part of the active site. Arg-214 contributes to the substrate binding site. His-250 is an active-site residue. The substrate site is built by Asp-252 and Asn-364. Cys-370 acts as the Nucleophile in catalysis.

This sequence belongs to the succinylarginine dihydrolase family. As to quaternary structure, homodimer.

It catalyses the reaction N(2)-succinyl-L-arginine + 2 H2O + 2 H(+) = N(2)-succinyl-L-ornithine + 2 NH4(+) + CO2. It participates in amino-acid degradation; L-arginine degradation via AST pathway; L-glutamate and succinate from L-arginine: step 2/5. Catalyzes the hydrolysis of N(2)-succinylarginine into N(2)-succinylornithine, ammonia and CO(2). This chain is N-succinylarginine dihydrolase, found in Idiomarina loihiensis (strain ATCC BAA-735 / DSM 15497 / L2-TR).